Consider the following 854-residue polypeptide: Envelope glycoprotein gp160 (854 aa).

The N-terminal stretch at 1-20 is a signal peptide; it reads MGRLLIKILIIAIGISIGIG. Residues 21-705 lie on the Extracellular side of the membrane; the sequence is NLYVTVFYGI…IILGLRFAWV (685 aa). Asn-35 is a glycosylation site (N-linked (GlcNAc...) asparagine; by host). Residues Cys-42 and Cys-55 are joined by a disulfide bond. N-linked (GlcNAc...) asparagine; by host glycans are attached at residues Asn-68, Asn-115, Asn-136, Asn-153, Asn-168, Asn-182, and Asn-199. 5 disulfides stabilise this stretch: Cys-99-Cys-207, Cys-106-Cys-198, Cys-111-Cys-154, Cys-220-Cys-250, and Cys-230-Cys-242. Residues 111-153 form a V1 region; sequence CVELNGTATTKATTTATTTMTTPCQNCSTEQIEGEMAEEPASN. The interval 154-198 is V2; sequence CTFAIAGYQRDVKKNYSMTWYDQELVCNNKTGSEKGSKDCYMIHC. 13 N-linked (GlcNAc...) asparagine; by host glycosylation sites follow: Asn-244, Asn-255, Asn-265, Asn-271, Asn-283, Asn-295, Asn-305, Asn-355, Asn-400, Asn-409, Asn-458, Asn-472, and Asn-478. Residues 300-332 are V3; the sequence is CRRPGNKTVLPVTIMAGLVFHSQKYNTRLKQAW. Residues Cys-300 and Cys-333 are joined by a disulfide bond. 2 disulfides stabilise this stretch: Cys-382–Cys-457 and Cys-389–Cys-430. Residues 389–430 are V4; that stretch reads CKMDWFINYLNNRTEDAEGTNRTCDKGKPGPGPCVQRTYVAC. The segment at 473–481 is V5; the sequence is KSGPINVTL. Residues 523–543 are fusion peptide; the sequence is VPFVLGFLGFLGAAGTAMGAA. The immunosuppression stretch occupies residues 586 to 602; it reads LNARVTALEKYLEDQAR. Asn-630 and Asn-646 each carry an N-linked (GlcNAc...) asparagine; by host glycan. Residues 633 to 672 adopt a coiled-coil conformation; sequence WLEWERQINALEGNITQLLEEAQNQESKNLDLYQKLDDWS. The MPER; binding to GalCer stretch occupies residues 667-688; it reads KLDDWSGFWSWFSLSTWLGYVK. Residues 706-726 form a helical membrane-spanning segment; the sequence is LWGCIRNIRQGYNPLPQIHIH. The YXXL motif; contains endocytosis signal motif lies at 717 to 720; it reads YNPL. Residues 727 to 854 are Cytoplasmic-facing; it reads SSAERPDNGG…VRQGLEKVLG (128 aa).

In terms of assembly, the mature envelope protein (Env) consists of a homotrimer of non-covalently associated gp120-gp41 heterodimers. The resulting complex protrudes from the virus surface as a spike. Interacts with host CD4 and CCR5. Gp120 also interacts with the C-type lectins CD209/DC-SIGN and CLEC4M/DC-SIGNR (collectively referred to as DC-SIGN(R)). As to quaternary structure, the mature envelope protein (Env) consists of a homotrimer of non-covalently associated gp120-gp41 heterodimers. The resulting complex protrudes from the virus surface as a spike. Post-translationally, specific enzymatic cleavages in vivo yield mature proteins. Envelope glycoproteins are synthesized as an inactive precursor that is heavily N-glycosylated and processed likely by host cell furin in the Golgi to yield the mature SU and TM proteins. The cleavage site between SU and TM requires the minimal sequence [KR]-X-[KR]-R.

It localises to the virion membrane. Its subcellular location is the host cell membrane. It is found in the host endosome membrane. Its function is as follows. The surface protein gp120 (SU) attaches the virus to the host lymphoid cell by binding to the primary receptor CD4. This interaction induces a structural rearrangement creating a high affinity binding site for a chemokine coreceptor like CCR5. This peculiar 2 stage receptor-interaction strategy allows gp120 to maintain the highly conserved coreceptor-binding site in a cryptic conformation, protected from neutralizing antibodies. These changes are transmitted to the transmembrane protein gp41 and are thought to activate its fusogenic potential by unmasking its fusion peptide. Surface protein gp120 (SU) may target the virus to gut-associated lymphoid tissue (GALT) by binding host ITGA4/ITGB7 (alpha-4/beta-7 integrins), a complex that mediates T-cell migration to the GALT. Interaction between gp120 and ITGA4/ITGB7 would allow the virus to enter GALT early in the infection, infecting and killing most of GALT's resting CD4+ T-cells. This T-cell depletion is believed to be the major insult to the host immune system leading to AIDS. Functionally, the surface protein gp120 is a ligand for CD209/DC-SIGN and CLEC4M/DC-SIGNR, which are respectively found on dendritic cells (DCs), and on endothelial cells of liver sinusoids and lymph node sinuses. These interactions allow capture of viral particles at mucosal surfaces by these cells and subsequent transmission to permissive cells. DCs are professional antigen presenting cells, critical for host immunity by inducing specific immune responses against a broad variety of pathogens. They act as sentinels in various tissues where they take up antigen, process it, and present it to T-cells following migration to lymphoid organs. SIV subverts the migration properties of dendritic cells to gain access to CD4+ T-cells in lymph nodes. Virus transmission to permissive T-cells occurs either in trans (without DCs infection, through viral capture and transmission), or in cis (following DCs productive infection, through the usual CD4-gp120 interaction), thereby inducing a robust infection. In trans infection, bound virions remain infectious over days and it is proposed that they are not degraded, but protected in non-lysosomal acidic organelles within the DCs close to the cell membrane thus contributing to the viral infectious potential during DCs' migration from the periphery to the lymphoid tissues. On arrival at lymphoid tissues, intact virions recycle back to DCs' cell surface allowing virus transmission to CD4+ T-cells. Virion capture also seems to lead to MHC-II-restricted viral antigen presentation, and probably to the activation of SIV-specific CD4+ cells. In terms of biological role, the transmembrane protein gp41 (TM) acts as a class I viral fusion protein. Under the current model, the protein has at least 3 conformational states: pre-fusion native state, pre-hairpin intermediate state, and post-fusion hairpin state. During fusion of viral and target intracellular membranes, the coiled coil regions (heptad repeats) assume a trimer-of-hairpins structure, positioning the fusion peptide in close proximity to the C-terminal region of the ectodomain. The formation of this structure appears to drive apposition and subsequent fusion of viral and target cell membranes. Complete fusion occurs in host cell endosomes. The virus undergoes clathrin-dependent internalization long before endosomal fusion, thus minimizing the surface exposure of conserved viral epitopes during fusion and reducing the efficacy of inhibitors targeting these epitopes. Membranes fusion leads to delivery of the nucleocapsid into the cytoplasm. Its function is as follows. The envelope glycoprotein gp160 precursor down-modulates cell surface CD4 antigen by interacting with it in the endoplasmic reticulum and blocking its transport to the cell surface. The gp120-gp41 heterodimer allows rapid transcytosis of the virus through CD4 negative cells such as simple epithelial monolayers of the intestinal, rectal and endocervical epithelial barriers. Both gp120 and gp41 specifically recognize glycosphingolipids galactosyl-ceramide (GalCer) or 3' sulfo-galactosyl-ceramide (GalS) present in the lipid rafts structures of epithelial cells. Binding to these alternative receptors allows the rapid transcytosis of the virus through the epithelial cells. This transcytotic vesicle-mediated transport of virions from the apical side to the basolateral side of the epithelial cells does not involve infection of the cells themselves. The chain is Envelope glycoprotein gp160 (env) from Cercopithecidae (Old World monkeys).